The primary structure comprises 233 residues: Ribosomal RNA large subunit methyltransferase E (233 aa).

Residues Gly80, Trp82, Asp108, Asp124, and Asp148 each coordinate S-adenosyl-L-methionine. Lys188 acts as the Proton acceptor in catalysis.

The protein belongs to the class I-like SAM-binding methyltransferase superfamily. RNA methyltransferase RlmE family.

It localises to the cytoplasm. The catalysed reaction is uridine(2552) in 23S rRNA + S-adenosyl-L-methionine = 2'-O-methyluridine(2552) in 23S rRNA + S-adenosyl-L-homocysteine + H(+). Functionally, specifically methylates the uridine in position 2552 of 23S rRNA at the 2'-O position of the ribose in the fully assembled 50S ribosomal subunit. The sequence is that of Ribosomal RNA large subunit methyltransferase E from Ruegeria pomeroyi (strain ATCC 700808 / DSM 15171 / DSS-3) (Silicibacter pomeroyi).